A 611-amino-acid chain; its full sequence is Vitamin B12 transporter BtuB (611 aa).

Positions 1–22 (MQKSALAIALASLLTPISYLHA) are cleaved as a signal peptide. A TonB box motif is present at residues 29–36 (ETVVVTAN). A TBDR plug domain is found at 41 to 154 (KASSTLADVE…IGGVINIITK (114 aa)). The region spanning 159–611 (QQGTTVSAGL…AYYLNIGYQF (453 aa)) is the TBDR beta-barrel domain. The TonB C-terminal box signature appears at 594-611 (NGYPAAERAYYLNIGYQF).

Belongs to the TonB-dependent receptor family. BtuB (TC 1.B.14.3.1) subfamily.

The protein resides in the cell outer membrane. Involved in the active translocation of vitamin B12 (cyanocobalamin) across the outer membrane to the periplasmic space. It derives its energy for transport by interacting with the trans-periplasmic membrane protein TonB. This Vibrio cholerae serotype O1 (strain ATCC 39541 / Classical Ogawa 395 / O395) protein is Vitamin B12 transporter BtuB.